The chain runs to 301 residues: Phosducin-like protein (301 aa).

Residue Thr-2 is modified to N-acetylthreonine. Positions 17–60 (YSTSEDEDSDHEDKDRGRGAPAISSTPAEAELAGEGISINTGPK) are disordered. Phosphoserine occurs at positions 20, 25, 226, 293, and 296. The region spanning 36–299 (APAISSTPAE…TCHSEDSDLE (264 aa)) is the Phosducin domain. A thioredoxin fold region spans residues 158 to 301 (FKQVFEIPSG…HSEDSDLEID (144 aa)).

It belongs to the phosducin family. As to quaternary structure, forms a complex with the beta and gamma subunits of the GTP-binding protein, transducin. Interacts with the CCT chaperonin complex.

It localises to the cell projection. The protein resides in the cilium. Its function is as follows. Functions as a co-chaperone for CCT in the assembly of heterotrimeric G protein complexes, facilitates the assembly of both Gbeta-Ggamma and RGS-Gbeta5 heterodimers. Also acts as a positive regulator of hedgehog signaling and regulates ciliary function. The sequence is that of Phosducin-like protein (Pdcl) from Mus musculus (Mouse).